We begin with the raw amino-acid sequence, 152 residues long: Transcriptional regulator MraZ (152 aa).

2 SpoVT-AbrB domains span residues A5–E52 and A81–V124.

Belongs to the MraZ family. As to quaternary structure, forms oligomers.

The protein localises to the cytoplasm. It localises to the nucleoid. Functionally, negatively regulates its own expression and that of the subsequent genes in the proximal part of the division and cell wall (dcw) gene cluster. Acts by binding directly to DNA. May also regulate the expression of genes outside the dcw cluster. In Proteus mirabilis (strain HI4320), this protein is Transcriptional regulator MraZ.